The primary structure comprises 541 residues: MVGKLNPTRFIFVTGGVVSSLGKGLAAASIGALLQARGFSVRLRKLDPYLNVDPGTMSPAQHGEVFVTSDGGETDLDLGHYERFTGVMKTRADNVTAGKIYHELIVKERRGDYLGQTVQVIPHVIDLIISCILHNDAGADFVICEIGGTVGDIESQPFLEAIRQVSYRLSKNLTIFVHLTLVPYIGAVGELKTKPTQHSVKELSSLGIQPDIVLYRSRAQLPQYQCAKIANFCNVAEDNIIAALDVSNIYMLPVMYHEHRLDTQILKHFDVDSPEPDLTQWENVLRMSETASDRIVIAIVGKYVTSLDAYTSLEEALRHAGLHSGIRVEIKWVDARLPASEIDLTDADAILIPGGFGDNGIGTKICAIEYARVNNIPMLGICLGMQLAVIEFALNVAGIEDANSTEFKSDCKNPVVCELPGLQVGDEYKMGGSMRLGSYTCNLAPGSRIMSIYDSSTVVERRRHRYGINPEYRDVLSKCGLAFTGAAEDRDLPEVLELPDHPWFIGVQFHPEFQSTPFKSHPLFLSFVTSTLQVKKASSRS.

The segment at 1–271 (MVGKLNPTRF…DTQILKHFDV (271 aa)) is amidoligase domain. S19 is a CTP binding site. S19 is a UTP binding site. ATP is bound by residues 20–25 (SLGKGL) and D77. Positions 77 and 145 each coordinate Mg(2+). Residues 152–154 (DIE), 192–197 (KTKPTQ), and K228 each bind CTP. UTP contacts are provided by residues 192 to 197 (KTKPTQ) and K228. A Glutamine amidotransferase type-1 domain is found at 296–537 (VIAIVGKYVT…VTSTLQVKKA (242 aa)). G355 is a binding site for L-glutamine. Catalysis depends on C382, which acts as the Nucleophile; for glutamine hydrolysis. L-glutamine-binding positions include 383-386 (LGMQ), E406, and R465. Active-site residues include H510 and E512.

The protein belongs to the CTP synthase family. In terms of assembly, homotetramer.

It carries out the reaction UTP + L-glutamine + ATP + H2O = CTP + L-glutamate + ADP + phosphate + 2 H(+). The catalysed reaction is L-glutamine + H2O = L-glutamate + NH4(+). It catalyses the reaction UTP + NH4(+) + ATP = CTP + ADP + phosphate + 2 H(+). It functions in the pathway pyrimidine metabolism; CTP biosynthesis via de novo pathway; CTP from UDP: step 2/2. Allosterically activated by GTP, when glutamine is the substrate; GTP has no effect on the reaction when ammonia is the substrate. The allosteric effector GTP functions by stabilizing the protein conformation that binds the tetrahedral intermediate(s) formed during glutamine hydrolysis. Inhibited by the product CTP, via allosteric rather than competitive inhibition. Catalyzes the ATP-dependent amination of UTP to CTP with either L-glutamine or ammonia as the source of nitrogen. Regulates intracellular CTP levels through interactions with the four ribonucleotide triphosphates. The sequence is that of CTP synthase from Anaplasma phagocytophilum (strain HZ).